Reading from the N-terminus, the 308-residue chain is D-alanine--D-alanine ligase B (308 aa).

Residues 102-302 form the ATP-grasp domain; that stretch reads KKIVKTVGVP…FGELLSWMVE (201 aa). An ATP-binding site is contributed by 128-183; that stretch reads PMKPPYVIKPVNEGSSFGVVIVSEGQSHPPQVVGSSEWKYGDTVMVERYIHGRELT. The Mg(2+) site is built by D252, E269, and N271.

It belongs to the D-alanine--D-alanine ligase family. Mg(2+) serves as cofactor. Mn(2+) is required as a cofactor.

The protein localises to the cytoplasm. The enzyme catalyses 2 D-alanine + ATP = D-alanyl-D-alanine + ADP + phosphate + H(+). It participates in cell wall biogenesis; peptidoglycan biosynthesis. In terms of biological role, cell wall formation. The protein is D-alanine--D-alanine ligase B of Mesorhizobium japonicum (strain LMG 29417 / CECT 9101 / MAFF 303099) (Mesorhizobium loti (strain MAFF 303099)).